A 406-amino-acid polypeptide reads, in one-letter code: Endoglucanase 1 (406 aa).

A signal peptide spans Met-1 to Ser-43. Polar residues-rich tracts occupy residues Gln-30–Glu-41 and Glu-51–Asp-62. Positions Gln-30 to Asp-62 are disordered. The active-site Proton donor is Glu-210. The active-site Nucleophile is the Glu-330.

This sequence belongs to the glycosyl hydrolase 5 (cellulase A) family.

It catalyses the reaction Endohydrolysis of (1-&gt;4)-beta-D-glucosidic linkages in cellulose, lichenin and cereal beta-D-glucans.. In Ruminococcus albus, this protein is Endoglucanase 1 (Eg I).